The following is a 172-amino-acid chain: Adenine phosphoribosyltransferase (172 aa).

The protein belongs to the purine/pyrimidine phosphoribosyltransferase family. Homodimer.

It is found in the cytoplasm. The enzyme catalyses AMP + diphosphate = 5-phospho-alpha-D-ribose 1-diphosphate + adenine. It functions in the pathway purine metabolism; AMP biosynthesis via salvage pathway; AMP from adenine: step 1/1. Catalyzes a salvage reaction resulting in the formation of AMP, that is energically less costly than de novo synthesis. This is Adenine phosphoribosyltransferase from Clostridium acetobutylicum (strain ATCC 824 / DSM 792 / JCM 1419 / IAM 19013 / LMG 5710 / NBRC 13948 / NRRL B-527 / VKM B-1787 / 2291 / W).